We begin with the raw amino-acid sequence, 117 residues long: Probable glycerol dehydratase-reactivating factor small subunit (117 aa).

Residue Glu31 coordinates Mg(2+).

This sequence belongs to the DdrB/PduH family. In terms of assembly, member of the GDR complex, probably composed of DhaF(2)/DhaG(2). Mg(2+) serves as cofactor.

In terms of biological role, small subunit of the glycerol dehydratase-reactivating factor (GDR), which reactivates suicidally inhibited adenosylcobalamin-dependent glycerol dehydratase. The polypeptide is Probable glycerol dehydratase-reactivating factor small subunit (Citrobacter freundii).